A 333-amino-acid chain; its full sequence is Salivary glue protein Sgs-3 (333 aa).

The first 23 residues, 1 to 23 (MKLTIATALVGILLIACAHVANG), serve as a signal peptide directing secretion. A disordered region spans residues 51-285 (TCRPPTTTRC…ATARPTSKPC (235 aa)). Residues 60–73 (CPPPTTTRCPPPTR) show a composition bias toward pro residues. Low complexity predominate over residues 74–88 (PAECTATTKRPTARP). The segment covering 89–277 (TTKRATTRRT…TKRATTKRAT (189 aa)) has biased composition (basic residues).

The chain is Salivary glue protein Sgs-3 (Sgs3) from Drosophila erecta (Fruit fly).